The following is a 555-amino-acid chain: Adenine deaminase (555 aa).

It belongs to the metallo-dependent hydrolases superfamily. Adenine deaminase family. The cofactor is Mn(2+).

The enzyme catalyses adenine + H2O + H(+) = hypoxanthine + NH4(+). The protein is Adenine deaminase of Methanosarcina mazei (strain ATCC BAA-159 / DSM 3647 / Goe1 / Go1 / JCM 11833 / OCM 88) (Methanosarcina frisia).